Here is a 491-residue protein sequence, read N- to C-terminus: UDP-N-acetylmuramate--L-alanine ligase (491 aa).

ATP is bound at residue Gly-126–Thr-132.

The protein belongs to the MurCDEF family.

The protein resides in the cytoplasm. The catalysed reaction is UDP-N-acetyl-alpha-D-muramate + L-alanine + ATP = UDP-N-acetyl-alpha-D-muramoyl-L-alanine + ADP + phosphate + H(+). It functions in the pathway cell wall biogenesis; peptidoglycan biosynthesis. Cell wall formation. In Klebsiella pneumoniae subsp. pneumoniae (strain ATCC 700721 / MGH 78578), this protein is UDP-N-acetylmuramate--L-alanine ligase.